A 171-amino-acid chain; its full sequence is MTNFTFDGAHSSLEFQIKHLMVSKVKGSFDQFDVAVEGDINDFSTLKATATIIPSSINTKNEARDNHLKSGDFFGTDEFDKITFETKSVTENKVVGDLTIKGITNEETFDVEFNGVSKNPMDGSQVTGVIVTGTINRENYGINFNQALETGGVMLGKDVKFEASAEFSISE.

Belongs to the UPF0312 family.

This Staphylococcus aureus (strain Mu50 / ATCC 700699) protein is UPF0312 protein SAV2687.